The primary structure comprises 2646 residues: Probable helicase senataxin (2646 aa).

Ser-102 bears the Phosphoserine mark. A Glycyl lysine isopeptide (Lys-Gly) (interchain with G-Cter in SUMO1) cross-link involves residue Lys-339. Ser-640 carries the post-translational modification Phosphoserine. Disordered stretches follow at residues Lys-705 to Asp-734 and Gly-825 to Asp-876. Polar residues predominate over residues Glu-714–Asn-727. The span at Leu-867–Asp-876 shows a compositional bias: acidic residues. 6 positions are modified to phosphoserine: Ser-870, Ser-871, Ser-872, Ser-938, Ser-1002, and Ser-1004. A disordered region spans residues Ile-1001–Lys-1023. The span at Asp-1003 to Glu-1014 shows a compositional bias: acidic residues. A Glycyl lysine isopeptide (Lys-Gly) (interchain with G-Cter in SUMO2) cross-link involves residue Lys-1051. The span at Arg-1122 to Gly-1133 shows a compositional bias: basic and acidic residues. Positions Arg-1122–Ser-1245 are disordered. The span at Gly-1147 to Tyr-1156 shows a compositional bias: basic residues. Positions Leu-1176–Ser-1189 are enriched in basic and acidic residues. Polar residues predominate over residues Thr-1196–Ser-1211. Over residues Thr-1212–Arg-1222 the composition is skewed to basic residues. Ser-1318 carries the phosphoserine modification. Residues Lys-1328, Lys-1329, and Lys-1398 each participate in a glycyl lysine isopeptide (Lys-Gly) (interchain with G-Cter in SUMO2) cross-link. Residue Ser-1472 is modified to Phosphoserine. At Thr-1474 the chain carries Phosphothreonine. Residues Leu-1591–Gln-1627 form a disordered region. Polar residues predominate over residues Leu-1595–Gln-1613. Position 1939–1946 (Gly-1939–Ser-1946) interacts with ATP. Residues Lys-2046 to Leu-2063 carry the Bipartite nuclear localization signal motif. Thr-2450 bears the Phosphothreonine mark. Disordered regions lie at residues Thr-2450–Asp-2472, His-2486–Leu-2506, and Ser-2569–Val-2624. Basic and acidic residues-rich tracts occupy residues Gly-2496–Leu-2506 and Lys-2593–Arg-2608. The tract at residues Arg-2632 to Leu-2646 is necessary for nuclear localization.

The protein belongs to the DNA2/NAM7 helicase family. As to quaternary structure, homodimer. Interacts with PER2; the interaction inhibits termination of circadian target genes. Interacts with CHD4, POLR2A, PRKDC and TRIM28. Interacts with UBE2I. Interacts (via N-terminus domain) with EXOSC9 (via C-terminus region); the interaction enhances SETX sumoylation. Interacts with NCL (via N-terminus domain). Interacts with PABPN1, PABPC1 and SF3B1. Interacts with SMN1/SMN2 and POLR2A; SMN1/SMN2 recruits SETX to POLR2A. Post-translationally, ubiquitinated. Sumoylated preferentially with SUMO2 or SUMO3. In terms of tissue distribution, expressed in cerebellum, hippocampus, olfactory bulb, Bergmann glial fibers, stellate cells and Purkinje cells. Expressed in the epithelial cells of the lens but not in mature lens fiber cells. Expressed in the retina (highly expressed in inner and outer segments of photoreceptors and outer plexiform layer cells but weakly expressed in the inner plexiform and ganglion cell layers). Expressed in the kidney.

Its subcellular location is the nucleus. The protein localises to the nucleoplasm. It localises to the nucleolus. The protein resides in the cytoplasm. It is found in the chromosome. Its subcellular location is the telomere. The protein localises to the cell projection. It localises to the axon. The protein resides in the growth cone. Functionally, probable RNA/DNA helicase involved in diverse aspects of RNA metabolism and genomic integrity. Plays a role in transcription regulation by its ability to modulate RNA Polymerase II (Pol II) binding to chromatin and through its interaction with proteins involved in transcription. Contributes to the mRNA splicing efficiency and splice site selection. Required for the resolution of R-loop RNA-DNA hybrid formation at G-rich pause sites located downstream of the poly(A) site, allowing XRN2 recruitment and XRN2-mediated degradation of the downstream cleaved RNA and hence efficient RNA polymerase II (RNAp II) transcription termination. Required for the 3' transcriptional termination of PER1 and CRY2, thus playing an important role in the circadian rhythm regulation. Involved in DNA double-strand breaks damage response generated by oxidative stress. In association with RRP45, targets the RNA exosome complex to sites of transcription-induced DNA damage. Plays a role in the development and maturation of germ cells: essential for male meiosis, acting at the interface of transcription and meiotic recombination, and in the process of gene silencing during meiotic sex chromosome inactivation (MSCI). Plays a role in neurite outgrowth in hippocampal cells through FGF8-activated signaling pathways. Inhibits retinoic acid-induced apoptosis. May be involved in telomeric stability through the regulation of telomere repeat-containing RNA (TERRA) transcription. The polypeptide is Probable helicase senataxin (Mus musculus (Mouse)).